The sequence spans 682 residues: Potassium-transporting ATPase ATP-binding subunit (682 aa).

A run of 4 helical transmembrane segments spans residues 34–54, 58–78, 219–239, and 254–274; these read PVMF…LAMV, IAGS…TVLF, IALT…TATL, and VLVA…LSAI. Asp307 serves as the catalytic 4-aspartylphosphate intermediate. Residues Asp344, Glu348, 377-384, and Lys395 contribute to the ATP site; that span reads FTAQSRMS. Residues Asp518 and Asp522 each coordinate Mg(2+). A run of 3 helical transmembrane segments spans residues 588–608, 616–636, and 662–682; these read FAII…LNVM, AILS…PLAL, and LLVP…LGLA.

It belongs to the cation transport ATPase (P-type) (TC 3.A.3) family. Type IA subfamily. As to quaternary structure, the system is composed of three essential subunits: KdpA, KdpB and KdpC.

It is found in the cell inner membrane. The catalysed reaction is K(+)(out) + ATP + H2O = K(+)(in) + ADP + phosphate + H(+). Functionally, part of the high-affinity ATP-driven potassium transport (or Kdp) system, which catalyzes the hydrolysis of ATP coupled with the electrogenic transport of potassium into the cytoplasm. This subunit is responsible for energy coupling to the transport system and for the release of the potassium ions to the cytoplasm. The chain is Potassium-transporting ATPase ATP-binding subunit from Salmonella dublin (strain CT_02021853).